A 543-amino-acid polypeptide reads, in one-letter code: CTP synthase (543 aa).

Residues 1 to 265 (MTKFIFVTGG…DRLVTDRFRI (265 aa)) form an amidoligase domain region. Ser-13 serves as a coordination point for CTP. Position 13 (Ser-13) interacts with UTP. ATP is bound by residues 14–19 (SLGKGI) and Asp-71. Mg(2+) contacts are provided by Asp-71 and Glu-139. CTP-binding positions include 146–148 (DIE), 186–191 (KTKPTQ), and Lys-222. UTP is bound by residues 186–191 (KTKPTQ) and Lys-222. Positions 290–541 (EIAMVGKYVD…VEAASQHKQT (252 aa)) constitute a Glutamine amidotransferase type-1 domain. Gly-351 is an L-glutamine binding site. Cys-378 acts as the Nucleophile; for glutamine hydrolysis in catalysis. Residues 379–382 (LGMQ), Glu-402, and Arg-469 contribute to the L-glutamine site. Residues His-514 and Glu-516 contribute to the active site.

The protein belongs to the CTP synthase family. As to quaternary structure, homotetramer.

The enzyme catalyses UTP + L-glutamine + ATP + H2O = CTP + L-glutamate + ADP + phosphate + 2 H(+). It catalyses the reaction L-glutamine + H2O = L-glutamate + NH4(+). The catalysed reaction is UTP + NH4(+) + ATP = CTP + ADP + phosphate + 2 H(+). It participates in pyrimidine metabolism; CTP biosynthesis via de novo pathway; CTP from UDP: step 2/2. With respect to regulation, allosterically activated by GTP, when glutamine is the substrate; GTP has no effect on the reaction when ammonia is the substrate. The allosteric effector GTP functions by stabilizing the protein conformation that binds the tetrahedral intermediate(s) formed during glutamine hydrolysis. Inhibited by the product CTP, via allosteric rather than competitive inhibition. Its function is as follows. Catalyzes the ATP-dependent amination of UTP to CTP with either L-glutamine or ammonia as the source of nitrogen. Regulates intracellular CTP levels through interactions with the four ribonucleotide triphosphates. The polypeptide is CTP synthase (Hydrogenovibrio crunogenus (strain DSM 25203 / XCL-2) (Thiomicrospira crunogena)).